The primary structure comprises 904 residues: Disintegrin and metalloproteinase domain-containing protein 22 (904 aa).

A signal peptide spans 1 to 23 (MQAAAAASFWLLCVLGTCPLARC). The propeptide occupies 24-223 (GRAGVASLKG…LKPRLKRRKR (200 aa)). Residues 24–734 (GRAGVASLKG…LSGNGVAGTN (711 aa)) are Extracellular-facing. An N-linked (GlcNAc...) asparagine glycan is attached at asparagine 163. One can recognise a Peptidase M12B domain in the interval 237 to 436 (KYIELMIVND…GGGACLFNKP (200 aa)). 17 cysteine pairs are disulfide-bonded: cysteine 347-cysteine 431, cysteine 390-cysteine 415, cysteine 392-cysteine 399, cysteine 445-cysteine 475, cysteine 456-cysteine 472, cysteine 458-cysteine 464, cysteine 471-cysteine 492, cysteine 483-cysteine 489, cysteine 488-cysteine 514, cysteine 501-cysteine 521, cysteine 508-cysteine 540, cysteine 533-cysteine 545, cysteine 552-cysteine 603, cysteine 567-cysteine 633, cysteine 581-cysteine 591, cysteine 598-cysteine 661, and cysteine 655-cysteine 666. A Disintegrin domain is found at 442 to 529 (PPECGNGFIE…QCAPNVHKMD (88 aa)). Residue asparagine 517 is glycosylated (N-linked (GlcNAc...) asparagine). An N-linked (GlcNAc...) asparagine glycan is attached at asparagine 632. Asparagine 673 carries an N-linked (GlcNAc...) asparagine glycan. The EGF-like domain maps to 673 to 710 (NFSTCSSSKAGTVCSGNGVCSNELKCVCNRHWTGADCG). Intrachain disulfides connect cysteine 677–cysteine 692, cysteine 686–cysteine 698, and cysteine 700–cysteine 709. A helical membrane pass occupies residues 735-755 (IIIGIIAGTILVLALILGITA). Over 756 to 857 (WGYKNYREQR…RFRPRSNSTE (102 aa)) the chain is Cytoplasmic. The tract at residues 769 to 904 (QGDYVKKPGD…QSARLWETSI (136 aa)) is disordered. Residues 789–808 (GGSTNSASSSKKRSNGLSHS) show a composition bias toward low complexity. Phosphoserine is present on residues serine 808, lysine 817, and serine 832. The span at 809-827 (WSERIPDTKHISDICENGR) shows a compositional bias: basic and acidic residues. A compositionally biased stretch (basic residues) spans 840-851 (NKKKIRGKRFRP). Serine 855, serine 860, serine 864, serine 868, and methionine 882 each carry phosphoserine. Residues 860 to 875 (SPAKSPSSSTGSIASS) are compositionally biased toward low complexity.

In terms of assembly, interacts with LGI1. Can bind to LGI4. Interacts with KCNA2, DLG2 and DLG4. Interacts with ADAM11. Interacts (via C-terminus) with YWHAB/14-3-3 beta. Interacts (via C-terminus) with YWHAZ/14-3-3 zeta. The precursor is cleaved by a furin endopeptidase. Detected in juxtaparanodal zones in the central nervous system and at nerve terminal plexuses of basket cells in the cerebellum (at protein level). Expressed at high levels in the brain. Strongly expressed in cerebellar granule cells and hippocampus. In spinal cord, expression is restricted to gray matter.

It is found in the cell membrane. Its subcellular location is the cell projection. It localises to the axon. In terms of biological role, probable ligand for integrin in the brain. This is a non catalytic metalloprotease-like protein. Involved in regulation of cell adhesion and spreading and in inhibition of cell proliferation. Neuronal receptor for LGI1. The polypeptide is Disintegrin and metalloproteinase domain-containing protein 22 (Adam22) (Mus musculus (Mouse)).